We begin with the raw amino-acid sequence, 305 residues long: Small ribosomal subunit protein uS3 (305 aa).

The KH type-2 domain maps to 17 to 86 (IDEFFSEELS…DPQVDVQEVD (70 aa)). 2 stretches are compositionally biased toward acidic residues: residues 207–262 (EPEG…EAET) and 272–305 (AAEE…EEET). Residues 207–305 (EPEGDVEELL…EDETTDEEET (99 aa)) form a disordered region.

The protein belongs to the universal ribosomal protein uS3 family. As to quaternary structure, part of the 30S ribosomal subunit.

Functionally, binds the lower part of the 30S subunit head. The chain is Small ribosomal subunit protein uS3 from Natronomonas pharaonis (strain ATCC 35678 / DSM 2160 / CIP 103997 / JCM 8858 / NBRC 14720 / NCIMB 2260 / Gabara) (Halobacterium pharaonis).